Reading from the N-terminus, the 300-residue chain is GTPase Era (300 aa).

An Era-type G domain is found at 6–173 (KSGFLSIIGR…VDVLKEHLPE (168 aa)). Positions 14–21 (GRPNVGKS) are G1. Residue 14 to 21 (GRPNVGKS) coordinates GTP. The G2 stretch occupies residues 40-44 (QTTRN). The G3 stretch occupies residues 61–64 (DTPG). GTP-binding positions include 61 to 65 (DTPGI) and 123 to 126 (NKID). Positions 123–126 (NKID) are G4. The G5 stretch occupies residues 152–154 (ISA). The region spanning 204–281 (TKEEVPHSIA…YLELWIKVKK (78 aa)) is the KH type-2 domain.

It belongs to the TRAFAC class TrmE-Era-EngA-EngB-Septin-like GTPase superfamily. Era GTPase family. As to quaternary structure, monomer.

The protein resides in the cytoplasm. The protein localises to the cell membrane. In terms of biological role, an essential GTPase that binds both GDP and GTP, with rapid nucleotide exchange. Plays a role in 16S rRNA processing and 30S ribosomal subunit biogenesis and possibly also in cell cycle regulation and energy metabolism. The protein is GTPase Era of Oceanobacillus iheyensis (strain DSM 14371 / CIP 107618 / JCM 11309 / KCTC 3954 / HTE831).